We begin with the raw amino-acid sequence, 2250 residues long: DNA polymerase epsilon catalytic subunit A (2250 aa).

3 disordered regions span residues 1 to 63 (MPSR…GTAA), 235 to 259 (NGHG…DKEP), and 1990 to 2010 (PGTE…KAAS). Residues 32–41 (GGGGGGGGVA) show a composition bias toward gly residues. Basic and acidic residues predominate over residues 249–259 (DDTKKKKDKEP). Over residues 1990–2000 (PGTEATSTMNP) the composition is skewed to polar residues. 4 residues coordinate Zn(2+): C2118, C2121, C2156, and C2159. The CysA-type zinc finger occupies 2118 to 2159 (CKKCNAIRDVDLCRDPDRLPSVNPDSGEMLEPARKNWVCHKC). [4Fe-4S] cluster contacts are provided by C2190, C2193, C2205, and C2207. The short motif at 2190-2207 (CLKCSQTKSDNLAATCKC) is the CysB motif element.

It belongs to the DNA polymerase type-B family. In terms of assembly, heterotetramer. Consists of 4 subunits: POL2, DPB2, DPB3 and DPB4. [4Fe-4S] cluster serves as cofactor.

The protein localises to the nucleus. It carries out the reaction DNA(n) + a 2'-deoxyribonucleoside 5'-triphosphate = DNA(n+1) + diphosphate. DNA polymerase II participates in chromosomal DNA replication. This Cryptococcus neoformans var. neoformans serotype D (strain JEC21 / ATCC MYA-565) (Filobasidiella neoformans) protein is DNA polymerase epsilon catalytic subunit A (POL2).